A 56-amino-acid chain; its full sequence is Large ribosomal subunit protein bL32B (56 aa).

Basic residues predominate over residues M1–Q19. The tract at residues M1–A22 is disordered.

It belongs to the bacterial ribosomal protein bL32 family.

This Streptomyces coelicolor (strain ATCC BAA-471 / A3(2) / M145) protein is Large ribosomal subunit protein bL32B (rpmF2).